Consider the following 459-residue polypeptide: uncharacterized protein (459 aa).

The next 12 helical transmembrane spans lie at 25–45 (SYGFGDFGNGFMFDLGQIYLL), 52–72 (AGIPAAMAGGIFLVSKLFAAI), 95–115 (PYLLIGSIVLAVLTVLIFLSP), 123–143 (LIYAYASYMIWGIGYSFVNIP), 167–187 (IGSLGALFITSVAVMPLLVKF), 192–212 (VGYPVVMGLFAALGVFWFYIC), 249–269 (VLMTIFSISAYNIKSAMLVYF), 279–299 (LMAYMNFIIIGSSFLGVVFLP), 310–330 (TAMIGFGISVAADLINFMLPS), 332–352 (VYVFTILASIAFIGISIPNGI), 389–409 (SLSGFLSGIGLGIIGYVPNAV), and 420–440 (ALLLLYPAIALALAMFIIGFL).

This sequence belongs to the sodium:galactoside symporter (TC 2.A.2) family.

It is found in the cell membrane. This is an uncharacterized protein from Bacillus subtilis (strain 168).